Reading from the N-terminus, the 608-residue chain is UvrABC system protein C (608 aa).

One can recognise a GIY-YIG domain in the interval 22 to 100; it reads EKPGIYQYLN…IKKYKPRYNV (79 aa). The UVR domain occupies 214-249; it reads QEISRLLYQRMQDLAAEMKFEEAQKVKEKYALIENY.

The protein belongs to the UvrC family. As to quaternary structure, interacts with UvrB in an incision complex.

The protein resides in the cytoplasm. Its function is as follows. The UvrABC repair system catalyzes the recognition and processing of DNA lesions. UvrC both incises the 5' and 3' sides of the lesion. The N-terminal half is responsible for the 3' incision and the C-terminal half is responsible for the 5' incision. This chain is UvrABC system protein C, found in Bacteroides fragilis (strain ATCC 25285 / DSM 2151 / CCUG 4856 / JCM 11019 / LMG 10263 / NCTC 9343 / Onslow / VPI 2553 / EN-2).